Here is a 155-residue protein sequence, read N- to C-terminus: SsrA-binding protein (155 aa).

Belongs to the SmpB family.

It is found in the cytoplasm. Functionally, required for rescue of stalled ribosomes mediated by trans-translation. Binds to transfer-messenger RNA (tmRNA), required for stable association of tmRNA with ribosomes. tmRNA and SmpB together mimic tRNA shape, replacing the anticodon stem-loop with SmpB. tmRNA is encoded by the ssrA gene; the 2 termini fold to resemble tRNA(Ala) and it encodes a 'tag peptide', a short internal open reading frame. During trans-translation Ala-aminoacylated tmRNA acts like a tRNA, entering the A-site of stalled ribosomes, displacing the stalled mRNA. The ribosome then switches to translate the ORF on the tmRNA; the nascent peptide is terminated with the 'tag peptide' encoded by the tmRNA and targeted for degradation. The ribosome is freed to recommence translation, which seems to be the essential function of trans-translation. This is SsrA-binding protein from Streptococcus pneumoniae (strain 70585).